Reading from the N-terminus, the 635-residue chain is Dihydrolipoyllysine-residue acetyltransferase component of pyruvate dehydrogenase complex, mitochondrial (635 aa).

Residues 83–160 form the Lipoyl-binding 1 domain; the sequence is GKEITMPALS…EINKPIAIIV (78 aa). Lys124 is modified (N6-lipoyllysine). The disordered stretch occupies residues 171-204; sequence KNYKPSSQASSTPVQEEAPKPKQEAPKKSTKTYP. A compositionally biased stretch (polar residues) spans 174–184; sequence KPSSQASSTPV. The segment covering 187 to 197 has biased composition (basic and acidic residues); the sequence is EAPKPKQEAPK. The Lipoyl-binding 2 domain maps to 206–283; sequence HKVVGMPALS…QINQPVCIIV (78 aa). The residue at position 247 (Lys247) is an N6-lipoyllysine. The disordered stretch occupies residues 295-338; the sequence is YSVEEQSSSSSSSSQESTPSSSSSSSQESTPSQSSSQQTTRKSG. Low complexity predominate over residues 298–334; sequence EEQSSSSSSSSQESTPSSSSSSSQESTPSQSSSQQTT. The 38-residue stretch at 342-379 folds into the Peripheral subunit-binding (PSBD) domain; sequence FATPAARFEASSKGYDLSAINGTGPNNRILKADVLEFV. The segment at 382-413 is disordered; it reads KQEVAQQQQQQTTTTTKKPTTPTSSGEFTDIP. Residues 387 to 404 are compositionally biased toward low complexity; it reads QQQQQQTTTTTKKPTTPT. The tract at residues 403–635 is catalytic; it reads PTSSGEFTDI…YVENPIKLIL (233 aa).

This sequence belongs to the 2-oxoacid dehydrogenase family. In terms of assembly, 20 to 30 alpha(2)-beta(2) tetramers of E1 + 6 homodimers of E3 + 60 copies of E2. The cofactor is (R)-lipoate.

The protein resides in the mitochondrion matrix. It carries out the reaction N(6)-[(R)-dihydrolipoyl]-L-lysyl-[protein] + acetyl-CoA = N(6)-[(R)-S(8)-acetyldihydrolipoyl]-L-lysyl-[protein] + CoA. In terms of biological role, the pyruvate dehydrogenase complex catalyzes the overall conversion of pyruvate to acetyl-CoA and CO(2). It contains multiple copies of three enzymatic components: pyruvate dehydrogenase (E1), dihydrolipoamide acetyltransferase (E2) and lipoamide dehydrogenase (E3). The sequence is that of Dihydrolipoyllysine-residue acetyltransferase component of pyruvate dehydrogenase complex, mitochondrial (pdhC) from Dictyostelium discoideum (Social amoeba).